The primary structure comprises 576 residues: Arginine--tRNA ligase (576 aa).

Positions 122–132 match the 'HIGH' region motif; sequence PNVAKEMHVGH.

This sequence belongs to the class-I aminoacyl-tRNA synthetase family. As to quaternary structure, monomer.

It is found in the cytoplasm. The catalysed reaction is tRNA(Arg) + L-arginine + ATP = L-arginyl-tRNA(Arg) + AMP + diphosphate. This chain is Arginine--tRNA ligase, found in Thermobifida fusca (strain YX).